Here is a 450-residue protein sequence, read N- to C-terminus: Glucose-6-phosphate isomerase (450 aa).

Catalysis depends on Glu291, which acts as the Proton donor. Active-site residues include His312 and Lys426.

It belongs to the GPI family.

The protein localises to the cytoplasm. It catalyses the reaction alpha-D-glucose 6-phosphate = beta-D-fructose 6-phosphate. It participates in carbohydrate biosynthesis; gluconeogenesis. Its pathway is carbohydrate degradation; glycolysis; D-glyceraldehyde 3-phosphate and glycerone phosphate from D-glucose: step 2/4. Catalyzes the reversible isomerization of glucose-6-phosphate to fructose-6-phosphate. The protein is Glucose-6-phosphate isomerase of Clostridium perfringens (strain ATCC 13124 / DSM 756 / JCM 1290 / NCIMB 6125 / NCTC 8237 / Type A).